The sequence spans 475 residues: Trifunctional enzyme subunit beta, mitochondrial (475 aa).

The transit peptide at 1–34 (MTTILTSTFRNLSTTSKWALRSSIRPLSCSSQLH) directs the protein to the mitochondrion. Lys53 carries the N6-succinyllysine modification. Lys73 carries the N6-acetyllysine; alternate modification. Lys73 carries the N6-succinyllysine; alternate modification. The active-site Acyl-thioester intermediate is the Cys139. The stretch at 174 to 221 (IRHSRNMRKMMLDLNKAKTLGQRLSLLSKFRLNFLSPELPAVAEFSTN) is an intramembrane region. Lys189 is modified (N6-acetyllysine; alternate). Lys189 carries the N6-succinyllysine; alternate modification. 3 positions are modified to N6-succinyllysine: Lys191, Lys273, and Lys292. Residue Lys294 is modified to N6-acetyllysine; alternate. The residue at position 294 (Lys294) is an N6-succinyllysine; alternate. The residue at position 299 (Lys299) is an N6-acetyllysine. The residue at position 333 (Lys333) is an N6-acetyllysine; alternate. Position 333 is an N6-succinyllysine; alternate (Lys333). 2 positions are modified to N6-acetyllysine: Lys349 and Lys362. Residue Cys459 is the Proton donor/acceptor of the active site.

This sequence belongs to the thiolase-like superfamily. Thiolase family. In terms of assembly, heterotetramer of 2 alpha/HADHA and 2 beta/HADHB subunits; forms the mitochondrial trifunctional enzyme. Also purified as higher order heterooligomers including a 4 alpha/HADHA and 4 beta/HADHB heterooligomer which physiological significance remains unclear. The mitochondrial trifunctional enzyme interacts with MTLN. Interacts with RSAD2/viperin. Acetylation of Lys-202 is observed in liver mitochondria from fasted mice but not from fed mice.

It localises to the mitochondrion. Its subcellular location is the mitochondrion inner membrane. It is found in the mitochondrion outer membrane. The protein localises to the endoplasmic reticulum. It catalyses the reaction an acyl-CoA + acetyl-CoA = a 3-oxoacyl-CoA + CoA. It carries out the reaction butanoyl-CoA + acetyl-CoA = 3-oxohexanoyl-CoA + CoA. The catalysed reaction is hexanoyl-CoA + acetyl-CoA = 3-oxooctanoyl-CoA + CoA. The enzyme catalyses octanoyl-CoA + acetyl-CoA = 3-oxodecanoyl-CoA + CoA. It catalyses the reaction decanoyl-CoA + acetyl-CoA = 3-oxododecanoyl-CoA + CoA. It carries out the reaction dodecanoyl-CoA + acetyl-CoA = 3-oxotetradecanoyl-CoA + CoA. The catalysed reaction is tetradecanoyl-CoA + acetyl-CoA = 3-oxohexadecanoyl-CoA + CoA. It participates in lipid metabolism; fatty acid beta-oxidation. Functionally, mitochondrial trifunctional enzyme catalyzes the last three of the four reactions of the mitochondrial beta-oxidation pathway. The mitochondrial beta-oxidation pathway is the major energy-producing process in tissues and is performed through four consecutive reactions breaking down fatty acids into acetyl-CoA. Among the enzymes involved in this pathway, the trifunctional enzyme exhibits specificity for long-chain fatty acids. Mitochondrial trifunctional enzyme is a heterotetrameric complex composed of two proteins, the trifunctional enzyme subunit alpha/HADHA carries the 2,3-enoyl-CoA hydratase and the 3-hydroxyacyl-CoA dehydrogenase activities, while the trifunctional enzyme subunit beta/HADHB described here bears the 3-ketoacyl-CoA thiolase activity. The sequence is that of Trifunctional enzyme subunit beta, mitochondrial (Hadhb) from Mus musculus (Mouse).